Here is a 336-residue protein sequence, read N- to C-terminus: Immune-associated nucleotide-binding protein 6 (336 aa).

The AIG1-type G domain maps to 33–241 (EPVKNVVLVG…FTDTMHRRIQ (209 aa)). The G1 stretch occupies residues 42–49 (GRTGNGKS). GTP is bound by residues 42–50 (GRTGNGKSA) and Ser-63. A G2 region spans residues 69–73 (GVTTR). The tract at residues 91–94 (DTPG) is G3. The G4 stretch occupies residues 161-164 (TCGD). The G5 stretch occupies residues 200–202 (DNR). Residue Asn-201 participates in GTP binding. Residues 237-270 (HRRIQEEAARVKREEKEIEEKNIADEEKAALKKQ) are a coiled coil.

Belongs to the TRAFAC class TrmE-Era-EngA-EngB-Septin-like GTPase superfamily. AIG1/Toc34/Toc159-like paraseptin GTPase family. IAN subfamily. In terms of tissue distribution, mostly expressed in pollen. Also detected in lateral roots and radicles.

The polypeptide is Immune-associated nucleotide-binding protein 6 (Arabidopsis thaliana (Mouse-ear cress)).